A 57-amino-acid polypeptide reads, in one-letter code: uncharacterized protein (57 aa).

The chain crosses the membrane as a helical span at residues 34–54; that stretch reads AALLDAAALVVIPGLLTAAAV.

Its subcellular location is the membrane. This is an uncharacterized protein from Dictyostelium discoideum (Social amoeba).